The sequence spans 110 residues: Phosphoribosyl-ATP pyrophosphatase (110 aa).

It belongs to the PRA-PH family.

The protein localises to the cytoplasm. The enzyme catalyses 1-(5-phospho-beta-D-ribosyl)-ATP + H2O = 1-(5-phospho-beta-D-ribosyl)-5'-AMP + diphosphate + H(+). It functions in the pathway amino-acid biosynthesis; L-histidine biosynthesis; L-histidine from 5-phospho-alpha-D-ribose 1-diphosphate: step 2/9. This is Phosphoribosyl-ATP pyrophosphatase from Pseudomonas savastanoi pv. phaseolicola (strain 1448A / Race 6) (Pseudomonas syringae pv. phaseolicola (strain 1448A / Race 6)).